A 351-amino-acid chain; its full sequence is tRNA (guanine(10)-N2)-dimethyltransferase (351 aa).

One can recognise a THUMP domain in the interval 57 to 165; sequence EGHRIIFRYN…ENTFFISNVL (109 aa).

Belongs to the methyltransferase superfamily. Trm-G10 family. In terms of assembly, monomer.

Its subcellular location is the cytoplasm. The enzyme catalyses guanosine(10) in tRNA + 2 S-adenosyl-L-methionine = N(2)-dimethylguanosine(10) in tRNA + 2 S-adenosyl-L-homocysteine + 2 H(+). In terms of biological role, catalyzes the adenosylmethionine-dependent methylation of the exocyclic amino group (N(2)) of guanosine at position 10 of various tRNAs. Acts via a two-step process that leads to the formation of either N(2)-monomethyl (m(2)G) or N(2)-dimethylguanosine (m(2)(2)G). This is tRNA (guanine(10)-N2)-dimethyltransferase (trmG10) from Methanocaldococcus jannaschii (strain ATCC 43067 / DSM 2661 / JAL-1 / JCM 10045 / NBRC 100440) (Methanococcus jannaschii).